The primary structure comprises 87 residues: Phosphoribosyl-ATP pyrophosphatase (87 aa).

It belongs to the PRA-PH family.

The protein localises to the cytoplasm. The catalysed reaction is 1-(5-phospho-beta-D-ribosyl)-ATP + H2O = 1-(5-phospho-beta-D-ribosyl)-5'-AMP + diphosphate + H(+). It participates in amino-acid biosynthesis; L-histidine biosynthesis; L-histidine from 5-phospho-alpha-D-ribose 1-diphosphate: step 2/9. The protein is Phosphoribosyl-ATP pyrophosphatase of Pseudarthrobacter chlorophenolicus (strain ATCC 700700 / DSM 12829 / CIP 107037 / JCM 12360 / KCTC 9906 / NCIMB 13794 / A6) (Arthrobacter chlorophenolicus).